A 204-amino-acid polypeptide reads, in one-letter code: Ras-related and estrogen-regulated growth inhibitor-like protein (204 aa).

Residues 1–204 (MNDVKLTVLG…NVFGKRRKSV (204 aa)) are small GTPase-like. GTP is bound by residues 10–17 (GGEGTGKS), 57–63 (DPCSQPQ), and 122–125 (NKQD).

This sequence belongs to the small GTPase superfamily. Ras family.

It carries out the reaction GTP + H2O = GDP + phosphate + H(+). In terms of biological role, binds GDP/GTP and may possess intrinsic GTPase activity. This is Ras-related and estrogen-regulated growth inhibitor-like protein (RERGL) from Bos taurus (Bovine).